Consider the following 825-residue polypeptide: 5E5 antigen (825 aa).

The disordered stretch occupies residues 126-825; that stretch reads LSRDGYETET…RPRPSPKSPR (700 aa). Pro residues predominate over residues 157–180; that stretch reads PRAPPEPPDPGAPRPPPDPGPLPL. Residues 191-200 are compositionally biased toward polar residues; it reads VQVSTEQLLM. Residues 217–237 show a composition bias toward basic and acidic residues; that stretch reads TRGDRTQEGGEKPREQREGPR. Over residues 247–256 the composition is skewed to low complexity; the sequence is QQEESPQQEP. Basic and acidic residues-rich tracts occupy residues 257-277, 315-342, and 392-406; these read SSER…HEGE, VPKD…RDWT, and QERE…ESPR. Positions 437 to 449 are enriched in basic residues; the sequence is RRPRKRRGRKGRM. Residues 455 to 477 are compositionally biased toward low complexity; the sequence is TTATSASATGGPAEEAGASAPEG. Over residues 485–505 the composition is skewed to basic residues; sequence GRARGPRQQARRRHGPQRRRG. Positions 524-536 are enriched in polar residues; sequence GTTSGEQRADQSQ. A compositionally biased stretch (low complexity) spans 537-562; sequence TLPALAGAPTAHAHAVPGPGPAAATL. Basic residues predominate over residues 565 to 575; that stretch reads RGRRGSWRGGR. Gly residues predominate over residues 576–588; the sequence is RGGGAGASGGGRG. A compositionally biased stretch (pro residues) spans 721–733; that stretch reads FPPPPPTRPPPVL. Low complexity predominate over residues 734-750; that stretch reads LPLLRLTCAGDPGASRP.

As to expression, expressed in neurons.

The protein localises to the nucleus. In terms of biological role, might have DNA-binding ability. In Rattus norvegicus (Rat), this protein is 5E5 antigen.